A 241-amino-acid polypeptide reads, in one-letter code: Beta-nerve growth factor (241 aa).

Residues 1–18 (MSMLFYTLITAFLIGVQA) form the signal peptide. Positions 19 to 121 (EPYTDSNVPE…SFNRTHRSKR (103 aa)) are excised as a propeptide. N-linked (GlcNAc...) asparagine glycans are attached at residues Asn69, Asn114, and Asn166. 3 disulfide bridges follow: Cys136–Cys201, Cys179–Cys229, and Cys189–Cys231. Residues Tyr173 and Lys209 each coordinate a 1-acyl-sn-glycero-3-phospho-(1D-myo-inositol). Lys209 serves as a coordination point for a 1-acyl-sn-glycero-3-phospho-L-serine.

Belongs to the NGF-beta family. As to quaternary structure, homodimer. The homodimer interacts with a single NTRK1 chain. The homodimer interacts with a single NGFR chain. The NGF dimer interacts with a single SORCS2 chain (via extracellular domain). The NGF precursor (proNGF) binds to a receptor complex formed by SORT1 and NGFR, which leads to NGF endocytosis. Both mature NGF and the immature NGF precursor (proNGF) interact with SORCS2 and with the heterodimer formed by SORCS2 and NGFR (via extracellular domains). The NGF precursor (proNGF) has much higher affinity for SORCS2 than mature NGF. The NGF precursor (proNGF) has much higher affinity for SORT1 than mature NGF. Interacts with ADAM10 in a divalent cation-dependent manner. Interacts with SORCS3. Detected in the granule and pyramidal cell layer in the hippocampus.

The protein resides in the secreted. It localises to the endosome lumen. Its function is as follows. Nerve growth factor is important for the development and maintenance of the sympathetic and sensory nervous systems. Extracellular ligand for the NTRK1 and NGFR receptors, activates cellular signaling cascades to regulate neuronal proliferation, differentiation and survival. The immature NGF precursor (proNGF) functions as a ligand for the heterodimeric receptor formed by SORCS2 and NGFR, and activates cellular signaling cascades that lead to inactivation of RAC1 and/or RAC2, reorganization of the actin cytoskeleton and neuronal growth cone collapse. In contrast to mature NGF, the precursor form (proNGF) promotes neuronal apoptosis (in vitro). Inhibits metalloproteinase-dependent proteolysis of platelet glycoprotein VI. Binds lysophosphatidylinositol and lysophosphatidylserine between the two chains of the homodimer. The lipid-bound form promotes histamine relase from mast cells, contrary to the lipid-free form. This Rattus norvegicus (Rat) protein is Beta-nerve growth factor (Ngf).